The sequence spans 501 residues: Aldehyde dehydrogenase 1A1 (501 aa).

S2 is modified (N-acetylserine). K91 and K128 each carry N6-acetyllysine. NAD(+) contacts are provided by residues 167–170 (IPWN), 193–196 (KPAE), 226–227 (GP), and 246–247 (GS). Residue K252 is modified to N6-acetyllysine. The Proton acceptor role is filled by E269. Position 269–271 (269–271 (ELG)) interacts with NAD(+). Catalysis depends on C303, which acts as the Nucleophile. Residues 336-501 (LTPGINQGPQ…VAMKISQKNS (166 aa)) form a mediates interaction with PRMT3 region. T337 carries the phosphothreonine modification. 349-353 (EQHDK) provides a ligand contact to NAD(+). K353 and K367 each carry N6-acetyllysine. Position 400-402 (400-402 (EIF)) interacts with NAD(+). Residue K410 is modified to N6-acetyllysine. Phosphoserine is present on S413. N6-acetyllysine is present on residues K419, K435, and K495.

The protein belongs to the aldehyde dehydrogenase family. As to quaternary structure, homotetramer. Interacts with PRMT3; the interaction is direct, inhibits ALDH1A1 aldehyde dehydrogenase activity and is independent of the methyltransferase activity of PRMT3. In terms of processing, the N-terminus is blocked most probably by acetylation. Expressed in retina. Expressed in lens and cornea (at protein level). Expressed by midbrain dopamine neurons.

The protein resides in the cytoplasm. It is found in the cytosol. The protein localises to the cell projection. Its subcellular location is the axon. The enzyme catalyses an aldehyde + NAD(+) + H2O = a carboxylate + NADH + 2 H(+). The catalysed reaction is all-trans-retinal + NAD(+) + H2O = all-trans-retinoate + NADH + 2 H(+). It catalyses the reaction 9-cis-retinal + NAD(+) + H2O = 9-cis-retinoate + NADH + 2 H(+). It carries out the reaction 11-cis-retinal + NAD(+) + H2O = 11-cis-retinoate + NADH + 2 H(+). The enzyme catalyses 13-cis-retinal + NAD(+) + H2O = 13-cis-retinoate + NADH + 2 H(+). The catalysed reaction is 4-aminobutanal + NAD(+) + H2O = 4-aminobutanoate + NADH + 2 H(+). It catalyses the reaction 3-deoxyglucosone + NAD(+) + H2O = 2-dehydro-3-deoxy-D-gluconate + NADH + 2 H(+). It carries out the reaction (E)-4-hydroxynon-2-enal + NAD(+) + H2O = (E)-4-hydroxynon-2-enoate + NADH + 2 H(+). The enzyme catalyses malonaldehyde + NAD(+) + H2O = 3-oxopropanoate + NADH + 2 H(+). The catalysed reaction is hexanal + NAD(+) + H2O = hexanoate + NADH + 2 H(+). It catalyses the reaction propanal + NAD(+) + H2O = propanoate + NADH + 2 H(+). It carries out the reaction acetaldehyde + NAD(+) + H2O = acetate + NADH + 2 H(+). The enzyme catalyses benzaldehyde + NAD(+) + H2O = benzoate + NADH + 2 H(+). Its pathway is cofactor metabolism; retinol metabolism. Its activity is regulated as follows. The aminobutyraldehyde dehydrogenase activity is negatively regulated by ethanol in vivo. In terms of biological role, cytosolic dehydrogenase that catalyzes the irreversible oxidation of a wide range of aldehydes to their corresponding carboxylic acid. Functions downstream of retinol dehydrogenases and catalyzes the oxidation of retinaldehyde into retinoic acid, the second step in the oxidation of retinol/vitamin A into retinoic acid. This pathway is crucial to control the levels of retinol and retinoic acid, two important molecules which excess can be teratogenic and cytotoxic. Also oxidizes aldehydes resulting from lipid peroxidation like (E)-4-hydroxynon-2-enal/HNE, malonaldehyde and hexanal that form protein adducts and are highly cytotoxic. By participating for instance to the clearance of (E)-4-hydroxynon-2-enal/HNE in the lens epithelium prevents the formation of HNE-protein adducts and lens opacification. Also functions downstream of fructosamine-3-kinase in the fructosamine degradation pathway by catalyzing the oxidation of 3-deoxyglucosone, the carbohydrate product of fructosamine 3-phosphate decomposition, which is itself a potent glycating agent that may react with lysine and arginine side-chains of proteins. Also has an aminobutyraldehyde dehydrogenase activity and is probably part of an alternative pathway for the biosynthesis of GABA/4-aminobutanoate in midbrain, thereby playing a role in GABAergic synaptic transmission. The protein is Aldehyde dehydrogenase 1A1 of Mus musculus (Mouse).